The following is a 151-amino-acid chain: Large ribosomal subunit protein bL9 (151 aa).

The protein belongs to the bacterial ribosomal protein bL9 family.

Its function is as follows. Binds to the 23S rRNA. The polypeptide is Large ribosomal subunit protein bL9 (Prochlorococcus marinus (strain MIT 9301)).